Here is a 125-residue protein sequence, read N- to C-terminus: Large ribosomal subunit protein eL31 (125 aa).

It belongs to the eukaryotic ribosomal protein eL31 family. In terms of assembly, component of the large ribosomal subunit.

The protein localises to the cytoplasm. Component of the large ribosomal subunit. The ribosome is a large ribonucleoprotein complex responsible for the synthesis of proteins in the cell. This chain is Large ribosomal subunit protein eL31 (rpl31), found in Xenopus laevis (African clawed frog).